The following is a 196-amino-acid chain: Peptidyl-tRNA hydrolase (196 aa).

Tyr18 is a tRNA binding site. Residue His23 is the Proton acceptor of the active site. Phe69, Asn71, and Asn117 together coordinate tRNA.

The protein belongs to the PTH family. In terms of assembly, monomer.

Its subcellular location is the cytoplasm. It catalyses the reaction an N-acyl-L-alpha-aminoacyl-tRNA + H2O = an N-acyl-L-amino acid + a tRNA + H(+). Its function is as follows. Hydrolyzes ribosome-free peptidyl-tRNAs (with 1 or more amino acids incorporated), which drop off the ribosome during protein synthesis, or as a result of ribosome stalling. Catalyzes the release of premature peptidyl moieties from peptidyl-tRNA molecules trapped in stalled 50S ribosomal subunits, and thus maintains levels of free tRNAs and 50S ribosomes. The polypeptide is Peptidyl-tRNA hydrolase (Aliivibrio salmonicida (strain LFI1238) (Vibrio salmonicida (strain LFI1238))).